Here is a 213-residue protein sequence, read N- to C-terminus: ATP-dependent dethiobiotin synthetase BioD 2 (213 aa).

D13–I18 provides a ligand contact to ATP. T17 is a Mg(2+) binding site. K38 is a catalytic residue. Substrate is bound at residue T42. Residues D50 and E115–G118 contribute to the ATP site. D50 and E115 together coordinate Mg(2+).

This sequence belongs to the dethiobiotin synthetase family. In terms of assembly, homodimer. The cofactor is Mg(2+).

The protein resides in the cytoplasm. The catalysed reaction is (7R,8S)-7,8-diammoniononanoate + CO2 + ATP = (4R,5S)-dethiobiotin + ADP + phosphate + 3 H(+). The protein operates within cofactor biosynthesis; biotin biosynthesis; biotin from 7,8-diaminononanoate: step 1/2. Catalyzes a mechanistically unusual reaction, the ATP-dependent insertion of CO2 between the N7 and N8 nitrogen atoms of 7,8-diaminopelargonic acid (DAPA, also called 7,8-diammoniononanoate) to form a ureido ring. The sequence is that of ATP-dependent dethiobiotin synthetase BioD 2 from Pasteurella multocida (strain Pm70).